A 309-amino-acid chain; its full sequence is General transcription factor IIH subunit 3 (309 aa).

The segment at 269–286 (CSVCLSIFCNFSPICTTC) adopts a C4-type zinc-finger fold.

Belongs to the TFB4 family. Part of a TFIID-containing RNA polymerase II pre-initiation complex that is composed of TBP and at least GTF2A1, GTF2A2, GTF2E1, GTF2E2, GTF2F1, GTF2H2, GTF2H3, GTF2H4, GTF2H5, GTF2B, TCEA1, ERCC2, ERCC3, TAF1, TAF2, TAF3, TAF4, TAF5, TAF6, TAF7, TAF8, TAF9, TAF10, TAF11, TAF12 and TAF13. Component of the 7-subunit TFIIH core complex composed of XPB/ERCC3, XPD/ERCC2, GTF2H1, GTF2H2, GTF2H3, GTF2H4 and GTF2H5, which is active in NER. The core complex associates with the 3-subunit CDK-activating kinase (CAK) module composed of CCNH/cyclin H, CDK7 and MNAT1 to form the 10-subunit holoenzyme (holo-TFIIH) active in transcription. Interacts with RARA; the interaction requires prior phosphorylation of RARA on 'Ser-369' which then enhances interaction of RARA with CDK7.

The protein resides in the nucleus. In terms of biological role, component of the general transcription and DNA repair factor IIH (TFIIH) core complex, which is involved in general and transcription-coupled nucleotide excision repair (NER) of damaged DNA and, when complexed to CAK, in RNA transcription by RNA polymerase II. In NER, TFIIH acts by opening DNA around the lesion to allow the excision of the damaged oligonucleotide and its replacement by a new DNA fragment. In transcription, TFIIH has an essential role in transcription initiation. When the pre-initiation complex (PIC) has been established, TFIIH is required for promoter opening and promoter escape. Phosphorylation of the C-terminal tail (CTD) of the largest subunit of RNA polymerase II by the kinase module CAK controls the initiation of transcription. In Mus musculus (Mouse), this protein is General transcription factor IIH subunit 3 (Gtf2h3).